A 362-amino-acid polypeptide reads, in one-letter code: MEIIKLDHITKQYDDGFVALKDINLELESGKFYSLLGPSGSGKTTILRIIAGFTEASAGKVYFDGQDITNLDASKRHINTVFQNYALFPHLNVYENVAFALKLRQRPESEIREKVKDALHTVRLDGYANREIFELSGGQQQRVAIARAIINEPKVLLLDECLSALDKRLRKEMQFELRAIQKKLGITFIFVTHDQEEALAMSDEIFVLNDGEIKQSGSPVDIYDEPVNDFVARFIGDSNILSGRMIRDFAVEFAGKDFECADAGITPGEKVEVVLRPEDLDITTPAAGKLLVTVQSQLFLGDHFEIKAIGQDGFEWLIHSTNGVQIGQEVGIFFDPEDIHVMRLGETEEEFDARLETYEGED.

Positions 4–235 (IKLDHITKQY…PVNDFVARFI (232 aa)) constitute an ABC transporter domain. 37 to 44 (GPSGSGKT) contributes to the ATP binding site.

The protein belongs to the ABC transporter superfamily. Spermidine/putrescine importer (TC 3.A.1.11.1) family. In terms of assembly, the complex is composed of two ATP-binding proteins (PotA), two transmembrane proteins (PotB and PotC) and a solute-binding protein (PotD).

It localises to the cell membrane. It carries out the reaction ATP + H2O + polyamine-[polyamine-binding protein]Side 1 = ADP + phosphate + polyamineSide 2 + [polyamine-binding protein]Side 1.. Functionally, part of the ABC transporter complex PotABCD involved in spermidine/putrescine import. Responsible for energy coupling to the transport system. The polypeptide is Spermidine/putrescine import ATP-binding protein PotA (Lactobacillus delbrueckii subsp. bulgaricus (strain ATCC BAA-365 / Lb-18)).